The primary structure comprises 353 residues: Photosystem II D2 protein (353 aa).

Threonine 2 is modified (N-acetylthreonine). Phosphothreonine is present on threonine 2. A helical transmembrane segment spans residues 41–61 (CAYFALGGWFTGTTFVTSWYT). Histidine 118 contributes to the chlorophyll a binding site. A helical membrane pass occupies residues 125-141 (GFMLRQFELARSVQLRP). The pheophytin a site is built by glutamine 130 and asparagine 143. A helical membrane pass occupies residues 153 to 166 (VFVSVFLIYPLGQS). Residue histidine 198 coordinates chlorophyll a. The helical transmembrane segment at 208 to 228 (AALLCAIHGATVENTLFEDGD) threads the bilayer. A plastoquinone is bound by residues histidine 215 and phenylalanine 262. Position 215 (histidine 215) interacts with Fe cation. Fe cation is bound at residue histidine 269. A helical transmembrane segment spans residues 279–295 (GLWMSAIGVVGLALNLR).

It belongs to the reaction center PufL/M/PsbA/D family. PSII is composed of 1 copy each of membrane proteins PsbA, PsbB, PsbC, PsbD, PsbE, PsbF, PsbH, PsbI, PsbJ, PsbK, PsbL, PsbM, PsbT, PsbX, PsbY, PsbZ, Psb30/Ycf12, at least 3 peripheral proteins of the oxygen-evolving complex and a large number of cofactors. It forms dimeric complexes. The D1/D2 heterodimer binds P680, chlorophylls that are the primary electron donor of PSII, and subsequent electron acceptors. It shares a non-heme iron and each subunit binds pheophytin, quinone, additional chlorophylls, carotenoids and lipids. There is also a Cl(-1) ion associated with D1 and D2, which is required for oxygen evolution. The PSII complex binds additional chlorophylls, carotenoids and specific lipids. serves as cofactor.

It localises to the plastid. The protein resides in the chloroplast thylakoid membrane. It catalyses the reaction 2 a plastoquinone + 4 hnu + 2 H2O = 2 a plastoquinol + O2. Functionally, photosystem II (PSII) is a light-driven water:plastoquinone oxidoreductase that uses light energy to abstract electrons from H(2)O, generating O(2) and a proton gradient subsequently used for ATP formation. It consists of a core antenna complex that captures photons, and an electron transfer chain that converts photonic excitation into a charge separation. The D1/D2 (PsbA/PsbD) reaction center heterodimer binds P680, the primary electron donor of PSII as well as several subsequent electron acceptors. D2 is needed for assembly of a stable PSII complex. In Phalaenopsis aphrodite subsp. formosana (Moth orchid), this protein is Photosystem II D2 protein.